The chain runs to 150 residues: D-aminoacyl-tRNA deacylase (150 aa).

Positions 138-139 (GP) match the Gly-cisPro motif, important for rejection of L-amino acids motif.

The protein belongs to the DTD family. As to quaternary structure, homodimer.

It localises to the cytoplasm. It carries out the reaction glycyl-tRNA(Ala) + H2O = tRNA(Ala) + glycine + H(+). The enzyme catalyses a D-aminoacyl-tRNA + H2O = a tRNA + a D-alpha-amino acid + H(+). An aminoacyl-tRNA editing enzyme that deacylates mischarged D-aminoacyl-tRNAs. Also deacylates mischarged glycyl-tRNA(Ala), protecting cells against glycine mischarging by AlaRS. Acts via tRNA-based rather than protein-based catalysis; rejects L-amino acids rather than detecting D-amino acids in the active site. By recycling D-aminoacyl-tRNA to D-amino acids and free tRNA molecules, this enzyme counteracts the toxicity associated with the formation of D-aminoacyl-tRNA entities in vivo and helps enforce protein L-homochirality. This chain is D-aminoacyl-tRNA deacylase, found in Chromobacterium violaceum (strain ATCC 12472 / DSM 30191 / JCM 1249 / CCUG 213 / NBRC 12614 / NCIMB 9131 / NCTC 9757 / MK).